We begin with the raw amino-acid sequence, 83 residues long: MADATEKAEHDRIFKKFDANGDGKISAAELGDALKNLGSVTHEDIKRMMAEIDTDGDGYISYQEFIDFASANRGLMKDVAKIF.

EF-hand domains are found at residues 5–40 and 43–75; these read TEKA…LGSV and EDIK…NRGL. Residues Asp-18, Asn-20, Asp-22, Lys-24, Glu-29, Asp-53, Asp-55, Asp-57, Tyr-59, and Glu-64 each contribute to the Ca(2+) site.

In terms of biological role, potential calcium sensor. In Arabidopsis thaliana (Mouse-ear cress), this protein is Probable calcium-binding protein CML28 (CML28).